A 242-amino-acid polypeptide reads, in one-letter code: Ubiquinone biosynthesis O-methyltransferase (242 aa).

Arg44, Gly64, Asp85, and Met129 together coordinate S-adenosyl-L-methionine.

It belongs to the methyltransferase superfamily. UbiG/COQ3 family.

The catalysed reaction is a 3-demethylubiquinol + S-adenosyl-L-methionine = a ubiquinol + S-adenosyl-L-homocysteine + H(+). It carries out the reaction a 3-(all-trans-polyprenyl)benzene-1,2-diol + S-adenosyl-L-methionine = a 2-methoxy-6-(all-trans-polyprenyl)phenol + S-adenosyl-L-homocysteine + H(+). It functions in the pathway cofactor biosynthesis; ubiquinone biosynthesis. In terms of biological role, O-methyltransferase that catalyzes the 2 O-methylation steps in the ubiquinone biosynthetic pathway. The sequence is that of Ubiquinone biosynthesis O-methyltransferase from Klebsiella pneumoniae (strain 342).